Reading from the N-terminus, the 38-residue chain is GFGCPLDQMQCHRHCQTITGRSGGYCSGPLKLTCTCYR.

3 cysteine pairs are disulfide-bonded: C4-C26, C11-C34, and C15-C36.

This sequence belongs to the invertebrate defensin family. Type 2 subfamily.

It localises to the secreted. Its function is as follows. Mediates the inducible antibacterial activity in larvae of A.cyanea. This chain is Defensin, found in Aeshna cyanea (Southern hawker dragonfly).